Consider the following 667-residue polypeptide: UvrABC system protein B (667 aa).

The region spanning 28–185 (NNFKQGLKEQ…NKLIELKYQR (158 aa)) is the Helicase ATP-binding domain. An ATP-binding site is contributed by 41 to 48 (GATGTGKT). A Beta-hairpin motif is present at residues 94–117 (YYDYYQPEAYVASSDTYIEKDSKI). The Helicase C-terminal domain occupies 432 to 594 (QMDDLYFEIK…VTPTALNKTI (163 aa)). Residues 629 to 664 (NKEIKRLQKTMKEAAKALDFEKAATLRDLILDLEKK) form the UVR domain.

Belongs to the UvrB family. As to quaternary structure, forms a heterotetramer with UvrA during the search for lesions. Interacts with UvrC in an incision complex.

Its subcellular location is the cytoplasm. Its function is as follows. The UvrABC repair system catalyzes the recognition and processing of DNA lesions. A damage recognition complex composed of 2 UvrA and 2 UvrB subunits scans DNA for abnormalities. Upon binding of the UvrA(2)B(2) complex to a putative damaged site, the DNA wraps around one UvrB monomer. DNA wrap is dependent on ATP binding by UvrB and probably causes local melting of the DNA helix, facilitating insertion of UvrB beta-hairpin between the DNA strands. Then UvrB probes one DNA strand for the presence of a lesion. If a lesion is found the UvrA subunits dissociate and the UvrB-DNA preincision complex is formed. This complex is subsequently bound by UvrC and the second UvrB is released. If no lesion is found, the DNA wraps around the other UvrB subunit that will check the other stand for damage. The protein is UvrABC system protein B of Aster yellows witches'-broom phytoplasma (strain AYWB).